The primary structure comprises 325 residues: Golgi to ER traffic protein 4 homolog B (325 aa).

2 disordered regions span residues 1-22 (MAAAMAEQEGSKGSARNRGGVQ) and 306-325 (SGEDDDVEDGQEDSSPIELD). A compositionally biased stretch (acidic residues) spans 307-317 (GEDDDVEDGQE).

This sequence belongs to the GET4 family. As to quaternary structure, component of the bag6/bat3 complex.

It localises to the cytoplasm. It is found in the cytosol. In terms of biological role, as part of a cytosolic protein quality control complex, the bag6/bat3 complex, maintains misfolded and hydrophobic patches-containing proteins in a soluble state and participates in their proper delivery to the endoplasmic reticulum or alternatively can promote their sorting to the proteasome where they undergo degradation. The bag6/bat3 complex is involved in the post-translational delivery of tail-anchored/type II transmembrane proteins to the endoplasmic reticulum membrane. Similarly, the bag6/bat3 complex also functions as a sorting platform for proteins of the secretory pathway that are mislocalized to the cytosol either delivering them to the proteasome for degradation or to the endoplasmic reticulum. The bag6/bat3 complex also plays a role in the endoplasmic reticulum-associated degradation (ERAD), a quality control mechanism that eliminates unwanted proteins of the endoplasmic reticulum through their retrotranslocation to the cytosol and their targeting to the proteasome. It maintains these retrotranslocated proteins in an unfolded yet soluble state condition in the cytosol to ensure their proper delivery to the proteasome. The chain is Golgi to ER traffic protein 4 homolog B (get4-b) from Xenopus laevis (African clawed frog).